The chain runs to 167 residues: Translationally-controlled tumor protein homolog (167 aa).

The region spanning 1–167 (MIIFTDVISG…WKHGVSEDKI (167 aa)) is the TCTP domain.

The protein belongs to the TCTP family.

The protein localises to the cytoplasm. The protein resides in the cytoskeleton. Functionally, involved in protein synthesis. Involved in microtubule stabilization. This Debaryomyces hansenii (strain ATCC 36239 / CBS 767 / BCRC 21394 / JCM 1990 / NBRC 0083 / IGC 2968) (Yeast) protein is Translationally-controlled tumor protein homolog.